The following is a 227-amino-acid chain: ATP phosphoribosyltransferase (227 aa).

The protein belongs to the ATP phosphoribosyltransferase family. Short subfamily. As to quaternary structure, heteromultimer composed of HisG and HisZ subunits.

Its subcellular location is the cytoplasm. The enzyme catalyses 1-(5-phospho-beta-D-ribosyl)-ATP + diphosphate = 5-phospho-alpha-D-ribose 1-diphosphate + ATP. It functions in the pathway amino-acid biosynthesis; L-histidine biosynthesis; L-histidine from 5-phospho-alpha-D-ribose 1-diphosphate: step 1/9. Its function is as follows. Catalyzes the condensation of ATP and 5-phosphoribose 1-diphosphate to form N'-(5'-phosphoribosyl)-ATP (PR-ATP). Has a crucial role in the pathway because the rate of histidine biosynthesis seems to be controlled primarily by regulation of HisG enzymatic activity. This is ATP phosphoribosyltransferase from Bordetella avium (strain 197N).